Here is a 652-residue protein sequence, read N- to C-terminus: DNA ligase (652 aa).

NAD(+) contacts are provided by residues 29 to 33 (DSQYD), 78 to 79 (SL), and E107. Catalysis depends on K109, which acts as the N6-AMP-lysine intermediate. Positions 130, 164, 278, and 302 each coordinate NAD(+). 4 residues coordinate Zn(2+): C395, C398, C413, and C418. In terms of domain architecture, BRCT spans 577–652 (STDAQLSGLT…IQDEDWLLNL (76 aa)).

This sequence belongs to the NAD-dependent DNA ligase family. LigA subfamily. It depends on Mg(2+) as a cofactor. Requires Mn(2+) as cofactor.

The catalysed reaction is NAD(+) + (deoxyribonucleotide)n-3'-hydroxyl + 5'-phospho-(deoxyribonucleotide)m = (deoxyribonucleotide)n+m + AMP + beta-nicotinamide D-nucleotide.. DNA ligase that catalyzes the formation of phosphodiester linkages between 5'-phosphoryl and 3'-hydroxyl groups in double-stranded DNA using NAD as a coenzyme and as the energy source for the reaction. It is essential for DNA replication and repair of damaged DNA. This Streptococcus agalactiae serotype III (strain NEM316) protein is DNA ligase.